We begin with the raw amino-acid sequence, 481 residues long: Xylulose kinase (481 aa).

A substrate-binding site is contributed by 81–82; sequence QH. Asp-239 serves as the catalytic Proton acceptor.

Belongs to the FGGY kinase family.

The enzyme catalyses D-xylulose + ATP = D-xylulose 5-phosphate + ADP + H(+). Catalyzes the phosphorylation of D-xylulose to D-xylulose 5-phosphate. The polypeptide is Xylulose kinase (Streptomyces coelicolor (strain ATCC BAA-471 / A3(2) / M145)).